A 457-amino-acid polypeptide reads, in one-letter code: MSGITLTKLTQERISIPNNNVITNGVENNIDSDTLSGTLTHLMEEHRTRVGAVTGPEAATTSTDGLISNGAERLRLQGSRLQTSRFACFRCCGNIITYLVRLRSTPEELEQRYKSKEIDKFLEKEKHTFRRQVKLLLLGAGESGKSTFLKQMRIIHGVNFDYELLLEYQSVIYQNVIRGMQVLLDAREKLNIAWGSDGREQDAYDAKLMECNSLDVPKFMEYAPPISRLWQDRGIRRAFERRREFQISDSVSYFLDEIQRLATPDYVPTHKDILHCRKATKGVYEFCVKVQNIPFVFVDVGGQRTQRQKWTRCFDSSVTSIIFLVSSSEFDQVLAEDRKTNRLEESKNIFDTIVNNATFKGISIILFLNKTDLLEQKVCNPETDIRWYYPHFNGNPHSVLDVQNFILQMFMSVRRSSSISRIYHHFTTAIDTRNINVVFNSVKDTILQRNLNALMLQ.

The region spanning 131–457 (RQVKLLLLGA…QRNLNALMLQ (327 aa)) is the G-alpha domain. A G1 motif region spans residues 134–147 (KLLLLGAGESGKST). GTP is bound by residues 139 to 146 (GAGESGKS), 274 to 280 (LHCRKAT), 299 to 303 (DVGGQ), 369 to 372 (NKTD), and A429. Residues S146 and T280 each coordinate Mg(2+). The tract at residues 272–280 (DILHCRKAT) is G2 motif. Residues 295–304 (FVFVDVGGQR) are G3 motif. The interval 365–372 (ILFLNKTD) is G4 motif. The segment at 427–432 (TTAIDT) is G5 motif.

The protein belongs to the G-alpha family. G(12) subfamily. In terms of assembly, g proteins are composed of 3 units; alpha, beta and gamma. The alpha chain contains the guanine nucleotide binding site. As to expression, in ovary, expressed in nurse cells and oocyte. In early embryos, distributed uniformly. At the extended germband stage, accumulates in the mesoderm.

The protein resides in the cytoplasm. Its function is as follows. May play a role in a signal transduction pathway used during gastrulation. Required specifically for the ventral furrow and posterior midgut invaginations, where it is necessary for coordinating cell shape changes. In terms of biological role, guanine nucleotide-binding proteins (G proteins) are involved as modulators or transducers in various transmembrane signaling systems. The chain is Guanine nucleotide-binding protein subunit alpha homolog (cta) from Drosophila melanogaster (Fruit fly).